A 572-amino-acid polypeptide reads, in one-letter code: Proline--tRNA ligase (572 aa).

Belongs to the class-II aminoacyl-tRNA synthetase family. ProS type 1 subfamily. In terms of assembly, homodimer.

The protein resides in the cytoplasm. The enzyme catalyses tRNA(Pro) + L-proline + ATP = L-prolyl-tRNA(Pro) + AMP + diphosphate. Its function is as follows. Catalyzes the attachment of proline to tRNA(Pro) in a two-step reaction: proline is first activated by ATP to form Pro-AMP and then transferred to the acceptor end of tRNA(Pro). As ProRS can inadvertently accommodate and process non-cognate amino acids such as alanine and cysteine, to avoid such errors it has two additional distinct editing activities against alanine. One activity is designated as 'pretransfer' editing and involves the tRNA(Pro)-independent hydrolysis of activated Ala-AMP. The other activity is designated 'posttransfer' editing and involves deacylation of mischarged Ala-tRNA(Pro). The misacylated Cys-tRNA(Pro) is not edited by ProRS. The protein is Proline--tRNA ligase of Haemophilus influenzae (strain 86-028NP).